A 339-amino-acid chain; its full sequence is Biotin synthase (339 aa).

Residues 51-278 (TEVELATLLS…KARVRLSAGR (228 aa)) enclose the Radical SAM core domain. Residues C66, C70, and C73 each coordinate [4Fe-4S] cluster. C110, C141, C201, and R273 together coordinate [2Fe-2S] cluster.

The protein belongs to the radical SAM superfamily. Biotin synthase family. As to quaternary structure, homodimer. [4Fe-4S] cluster serves as cofactor. [2Fe-2S] cluster is required as a cofactor.

The catalysed reaction is (4R,5S)-dethiobiotin + (sulfur carrier)-SH + 2 reduced [2Fe-2S]-[ferredoxin] + 2 S-adenosyl-L-methionine = (sulfur carrier)-H + biotin + 2 5'-deoxyadenosine + 2 L-methionine + 2 oxidized [2Fe-2S]-[ferredoxin]. The protein operates within cofactor biosynthesis; biotin biosynthesis; biotin from 7,8-diaminononanoate: step 2/2. Catalyzes the conversion of dethiobiotin (DTB) to biotin by the insertion of a sulfur atom into dethiobiotin via a radical-based mechanism. This Janthinobacterium sp. (strain Marseille) (Minibacterium massiliensis) protein is Biotin synthase.